The following is an 805-amino-acid chain: Cation channel sperm-associated auxiliary subunit delta (805 aa).

An N-terminal signal peptide occupies residues 1–16 (MLVLMLAAAVATMVRA). At 17 to 723 (HTLCRVHTVR…ALPVTKFQPL (707 aa)) the chain is on the extracellular side. 7 disulfide bridges follow: cysteine 20/cysteine 366, cysteine 56/cysteine 143, cysteine 142/cysteine 149, cysteine 384/cysteine 493, cysteine 507/cysteine 701, cysteine 522/cysteine 569, and cysteine 621/cysteine 651. N-linked (GlcNAc...) asparagine glycans are attached at residues asparagine 227, asparagine 419, asparagine 469, asparagine 535, and asparagine 627. The helical transmembrane segment at 724-745 (LTILLMVTTTLLTAWLAYAIPK) threads the bilayer. Topologically, residues 746-805 (QLRSEKGQRLLGFCYQILQLCLGVCFCTWLRGKLRQWLRPRRVKDQNRGKVRVAQKHPET) are cytoplasmic.

Belongs to the CATSPERD family. In terms of assembly, component of the CatSper complex or CatSpermasome composed of the core pore-forming members CATSPER1, CATSPER2, CATSPER3 and CATSPER4 as well as auxiliary members CATSPERB, CATSPERG2, CATSPERD, CATSPERE, CATSPERZ, C2CD6/CATSPERT, SLCO6C1, TMEM249, TMEM262 and EFCAB9. HSPA1 may be an additional auxiliary complex member. The core complex members CATSPER1, CATSPER2, CATSPER3 and CATSPER4 form a heterotetrameric channel. The auxiliary CATSPERB, CATSPERG2, CATSPERD and CATSPERE subunits form a pavilion-like structure over the pore which stabilizes the complex through interactions with CATSPER4, CATSPER3, CATSPER1 and CATSPER2 respectively. SLCO6C1 interacts with CATSPERE and TMEM262/CATSPERH interacts with CATSPERB, further stabilizing the complex. C2CD6/CATSPERT interacts at least with CATSPERD and is required for targeting the CatSper complex in the flagellar membrane. As to expression, testis-specific.

Its subcellular location is the cell projection. It is found in the cilium. It localises to the flagellum membrane. In terms of biological role, auxiliary component of the CatSper complex, a complex involved in sperm cell hyperactivation. Sperm cell hyperactivation is needed for sperm motility which is essential late in the preparation of sperm for fertilization. Required for CATSPER1 stability before intraflagellar transport and/or incorporation of the CatSper complex channel into the flagellar membrane. The protein is Cation channel sperm-associated auxiliary subunit delta of Mus musculus (Mouse).